The chain runs to 135 residues: uncharacterized protein (135 aa).

Residues 8–123 enclose the HotDog ACOT-type domain; it reads PQGTIVLKTL…IFIYVAIDET (116 aa).

It belongs to the acyl coenzyme A hydrolase family.

This is an uncharacterized protein from Buchnera aphidicola subsp. Schizaphis graminum (strain Sg).